We begin with the raw amino-acid sequence, 318 residues long: Large ribosomal subunit protein uL10 (318 aa).

At Tyr24 the chain carries Phosphotyrosine. Thr59 carries the post-translational modification Phosphothreonine. A Glycyl lysine isopeptide (Lys-Gly) (interchain with G-Cter in ubiquitin) cross-link involves residue Lys264. A Glycyl lysine isopeptide (Lys-Gly) (interchain with G-Cter in SUMO1); alternate cross-link involves residue Lys298. Residue Lys298 forms a Glycyl lysine isopeptide (Lys-Gly) (interchain with G-Cter in SUMO2); alternate linkage. Residues 298–318 form a disordered region; that stretch reads KVEAKEESEESDEDMGFGLFD. The span at 303–312 shows a compositional bias: acidic residues; that stretch reads EESEESDEDM. Phosphoserine is present on residues Ser305 and Ser308.

Belongs to the universal ribosomal protein uL10 family. In terms of assembly, P0 forms a pentameric complex by interaction with dimers of P1 and P2. Identified in a IGF2BP1-dependent mRNP granule complex containing untranslated mRNAs. Interacts with APEX1. Interacts with FMR1. Post-translationally, ubiquitinated at Lys-264 by RNF14 and RNF25 in response to ribosome collisions (ribosome stalling).

The protein resides in the nucleus. It localises to the cytoplasm. Its function is as follows. Ribosomal protein P0 is the functional equivalent of E.coli protein L10. This chain is Large ribosomal subunit protein uL10 (RPLP0), found in Sus scrofa (Pig).